Consider the following 249-residue polypeptide: Isoamyl acetate-hydrolyzing esterase 1 homolog (249 aa).

The active-site Nucleophile is the Ser-24. Lys-63 carries the N6-succinyllysine modification. Asp-197 (proton donor) is an active-site residue. The Proton acceptor role is filled by His-200.

Belongs to the 'GDSL' lipolytic enzyme family. IAH1 subfamily.

Functionally, probable lipase. The polypeptide is Isoamyl acetate-hydrolyzing esterase 1 homolog (Iah1) (Rattus norvegicus (Rat)).